A 302-amino-acid chain; its full sequence is Elongation factor Ts (302 aa).

An involved in Mg(2+) ion dislocation from EF-Tu region spans residues 82–85 (TDFV).

Belongs to the EF-Ts family.

The protein localises to the cytoplasm. Functionally, associates with the EF-Tu.GDP complex and induces the exchange of GDP to GTP. It remains bound to the aminoacyl-tRNA.EF-Tu.GTP complex up to the GTP hydrolysis stage on the ribosome. The protein is Elongation factor Ts of Nitrosospira multiformis (strain ATCC 25196 / NCIMB 11849 / C 71).